The chain runs to 465 residues: D-arabinitol 4-dehydrogenase (465 aa).

The protein belongs to the mannitol dehydrogenase family.

The catalysed reaction is D-arabinitol + NAD(+) = D-xylulose + NADH + H(+). Its pathway is carbohydrate metabolism; D-arabinitol metabolism. The polypeptide is D-arabinitol 4-dehydrogenase (dalD) (Ralstonia nicotianae (strain ATCC BAA-1114 / GMI1000) (Ralstonia solanacearum)).